The following is a 769-amino-acid chain: Discoidin, CUB and LCCL domain-containing protein 2 (769 aa).

Residues 1-29 are compositionally biased toward low complexity; that stretch reads MASRAPLRAARSPQDPGGRAAPAATGRAP. Residues 1-39 form a disordered region; the sequence is MASRAPLRAARSPQDPGGRAAPAATGRAPLPSAGWCPLP. The N-terminal stretch at 1–63 is a signal peptide; sequence MASRAPLRAA…LLLLLPDAGA (63 aa). Topologically, residues 64–523 are extracellular; that stretch reads QKGDGCGHTV…VTPSVTKDVA (460 aa). 2 disulfide bridges follow: cysteine 69-cysteine 96 and cysteine 123-cysteine 145. A CUB domain is found at 69–184; the sequence is CGHTVLGPES…RGFLASYSVI (116 aa). N-linked (GlcNAc...) asparagine glycosylation occurs at asparagine 92. N-linked (GlcNAc...) asparagine glycosylation is present at asparagine 152. The LCCL domain maps to 184–282; that stretch reads IDKQDLITCL…MVGYLSTSLF (99 aa). Cysteine 212 and cysteine 234 form a disulfide bridge. The N-linked (GlcNAc...) asparagine glycan is linked to asparagine 269. An intrachain disulfide couples cysteine 289 to cysteine 446. Positions 289–446 constitute an F5/8 type C domain; that stretch reads CYGTLGMESG…IAMKVELLGC (158 aa). The disordered stretch occupies residues 455–476; sequence PKLTQPPPPRNSNNLKNTTVHP. Over residues 465–474 the composition is skewed to polar residues; the sequence is NSNNLKNTTV. N-linked (GlcNAc...) asparagine glycosylation is found at asparagine 471 and asparagine 511. The helical transmembrane segment at 524–544 threads the bilayer; that stretch reads LAAVLVPVLVMALTTLILILV. Residues 545–769 lie on the Cytoplasmic side of the membrane; sequence CAWHWRNRKK…EKFDAFKETL (225 aa). Phosphoserine is present on serine 601. A disordered region spans residues 719-769; it reads SCSSGQAQYDTPKGGKPAAAPEELVYQVPQSTQEASGAGRDEKFDAFKETL. Over residues 757–769 the composition is skewed to basic and acidic residues; it reads GRDEKFDAFKETL.

Its subcellular location is the membrane. In Rattus norvegicus (Rat), this protein is Discoidin, CUB and LCCL domain-containing protein 2 (Dcbld2).